The chain runs to 335 residues: tRNA N6-adenosine threonylcarbamoyltransferase (335 aa).

Residues H112 and H116 each contribute to the Fe cation site. Substrate-binding positions include 134-138 (VVSGG), D167, G180, and N273. D301 serves as a coordination point for Fe cation.

It belongs to the KAE1 / TsaD family. It depends on Fe(2+) as a cofactor.

It localises to the cytoplasm. The catalysed reaction is L-threonylcarbamoyladenylate + adenosine(37) in tRNA = N(6)-L-threonylcarbamoyladenosine(37) in tRNA + AMP + H(+). Its function is as follows. Required for the formation of a threonylcarbamoyl group on adenosine at position 37 (t(6)A37) in tRNAs that read codons beginning with adenine. Is involved in the transfer of the threonylcarbamoyl moiety of threonylcarbamoyl-AMP (TC-AMP) to the N6 group of A37, together with TsaE and TsaB. TsaD likely plays a direct catalytic role in this reaction. The polypeptide is tRNA N6-adenosine threonylcarbamoyltransferase (Shouchella clausii (strain KSM-K16) (Alkalihalobacillus clausii)).